We begin with the raw amino-acid sequence, 143 residues long: Actin-depolymerizing factor 5 (143 aa).

In terms of domain architecture, ADF-H spans 11–143 (GMNVKEECQR…GYDVIRGRAQ (133 aa)).

This sequence belongs to the actin-binding proteins ADF family.

Its function is as follows. Actin-depolymerizing protein. Severs actin filaments (F-actin) and binds to actin monomers. The polypeptide is Actin-depolymerizing factor 5 (ADF5) (Oryza sativa subsp. japonica (Rice)).